Reading from the N-terminus, the 422-residue chain is 26S proteasome non-ATPase regulatory subunit 11B (422 aa).

The 165-residue stretch at 228–392 folds into the PCI domain; it reads AYSYFFEAFE…DVLIIFEEPP (165 aa).

It belongs to the proteasome subunit S9 family. In terms of assembly, component of the lid subcomplex of the 19S proteasome regulatory particle complex (also named PA700 complex). The 26S proteasome consists of a 20S proteasome core and two 19S regulatory subunits.

It is found in the nucleus. The protein resides in the cytoplasm. It localises to the cytosol. In terms of biological role, component of the lid subcomplex of the 26S proteasome, a multiprotein complex involved in the ATP-dependent degradation of ubiquitinated proteins. In the complex, psmd11b is required for proteasome assembly. The chain is 26S proteasome non-ATPase regulatory subunit 11B (psmd11b) from Danio rerio (Zebrafish).